The following is a 78-amino-acid chain: MLSQEQLDRINELANKSKVEPLTDAETAEQKELRTAYLEAFRGSFKNQMMGIKIVDEEGTDVTPEKLKQAQEEERNKQ.

Residues 57–78 (EEGTDVTPEKLKQAQEEERNKQ) form a disordered region. The segment covering 63–78 (TPEKLKQAQEEERNKQ) has biased composition (basic and acidic residues).

This sequence belongs to the UPF0291 family.

The protein localises to the cytoplasm. The chain is UPF0291 protein Exig_1097 from Exiguobacterium sibiricum (strain DSM 17290 / CCUG 55495 / CIP 109462 / JCM 13490 / 255-15).